Here is a 219-residue protein sequence, read N- to C-terminus: Lipid A acyltransferase PagP (219 aa).

Residues 1 to 28 (MRLILISHSRLFALSALFLIPTFDSLSA) form the signal peptide. The tract at residues 39–63 (IDRTTQSDSTTQRDSKTRRDPAPSF) is disordered. Residues 49–59 (TQRDSKTRRDP) show a composition bias toward basic and acidic residues. Catalysis depends on residues His-91, Asp-134, and Ser-135.

The protein belongs to the lipid A palmitoyltransferase family. Homodimer.

It is found in the cell outer membrane. The catalysed reaction is a lipid A + a 1,2-diacyl-sn-glycero-3-phosphocholine = a hepta-acyl lipid A + a 2-acyl-sn-glycero-3-phosphocholine. It carries out the reaction a lipid IVA + a 1,2-diacyl-sn-glycero-3-phosphocholine = a lipid IVB + a 2-acyl-sn-glycero-3-phosphocholine. The enzyme catalyses a lipid IIA + a 1,2-diacyl-sn-glycero-3-phosphocholine = a lipid IIB + a 2-acyl-sn-glycero-3-phosphocholine. In terms of biological role, transfers a fatty acid residue from the sn-1 position of a phospholipid to the N-linked hydroxyfatty acid chain on the proximal unit of lipid A or its precursors. This is Lipid A acyltransferase PagP from Dickeya zeae (strain Ech586) (Dickeya dadantii (strain Ech586)).